The sequence spans 519 residues: AarF domain-containing protein kinase 1 (519 aa).

One can recognise a Protein kinase domain in the interval serine 145–leucine 481. ATP contacts are provided by residues leucine 151–valine 159 and lysine 173. Aspartate 305 functions as the Proton acceptor in the catalytic mechanism.

This sequence belongs to the protein kinase superfamily. ADCK protein kinase family.

Its subcellular location is the mitochondrion. Appears to be essential for maintaining mitochondrial cristae formation and mitochondrial function by acting via YME1L1 in a kinase-independent manner to regulate essential mitochondrial structural proteins OPA1 and IMMT. The action of this enzyme is not yet clear. It is not known if it has protein kinase activity and what type of substrate it would phosphorylate (Ser, Thr or Tyr). The sequence is that of AarF domain-containing protein kinase 1 (ADCK1) from Gallus gallus (Chicken).